The chain runs to 136 residues: Large ribosomal subunit protein uL16 (136 aa).

It belongs to the universal ribosomal protein uL16 family. Part of the 50S ribosomal subunit.

Functionally, binds 23S rRNA and is also seen to make contacts with the A and possibly P site tRNAs. This Psychromonas ingrahamii (strain DSM 17664 / CCUG 51855 / 37) protein is Large ribosomal subunit protein uL16.